The following is a 348-amino-acid chain: Dihydroorotase (348 aa).

H14 and H16 together coordinate Zn(2+). Substrate contacts are provided by residues 16–18 (HLR) and N42. Residues K100, H137, and H175 each coordinate Zn(2+). Position 100 is an N6-carboxylysine (K100). H137 provides a ligand contact to substrate. L220 is a substrate binding site. D248 contacts Zn(2+). D248 is an active-site residue. Residues H252 and A264 each contribute to the substrate site.

This sequence belongs to the metallo-dependent hydrolases superfamily. DHOase family. Class II DHOase subfamily. As to quaternary structure, homodimer. Requires Zn(2+) as cofactor.

It catalyses the reaction (S)-dihydroorotate + H2O = N-carbamoyl-L-aspartate + H(+). The protein operates within pyrimidine metabolism; UMP biosynthesis via de novo pathway; (S)-dihydroorotate from bicarbonate: step 3/3. Functionally, catalyzes the reversible cyclization of carbamoyl aspartate to dihydroorotate. In Pseudomonas aeruginosa (strain UCBPP-PA14), this protein is Dihydroorotase.